The chain runs to 70 residues: Phycobilisome 8.1 kDa linker polypeptide, phycocyanin-associated, rod (70 aa).

Residues 5–63 (SRSFQVEVSGLHQNEVTNQNNYPIRSSGSVFITIPFSRFNEELQRINRLGGKIVNIQPL) form the CpcD-like domain.

Belongs to the phycobilisome linker protein family.

The protein localises to the cellular thylakoid membrane. Functionally, rod linker protein, associated with phycocyanin. Linker polypeptides determine the state of aggregation and the location of the disk-shaped phycobiliprotein units within the phycobilisome and modulate their spectroscopic properties in order to mediate a directed and optimal energy transfer. This chain is Phycobilisome 8.1 kDa linker polypeptide, phycocyanin-associated, rod (cpcD3), found in Microchaete diplosiphon (Fremyella diplosiphon).